A 338-amino-acid chain; its full sequence is Protein-glutamate methylesterase/protein-glutamine glutaminase 2 (338 aa).

A Response regulatory domain is found at R2 to L119. Position 53 is a 4-aspartylphosphate (D53). Residues P145–V330 enclose the CheB-type methylesterase domain. Active-site residues include S158, H185, and D278.

Belongs to the CheB family. In terms of processing, phosphorylated by CheA. Phosphorylation of the N-terminal regulatory domain activates the methylesterase activity.

The protein resides in the cytoplasm. The catalysed reaction is [protein]-L-glutamate 5-O-methyl ester + H2O = L-glutamyl-[protein] + methanol + H(+). It carries out the reaction L-glutaminyl-[protein] + H2O = L-glutamyl-[protein] + NH4(+). Its function is as follows. Involved in chemotaxis. Part of a chemotaxis signal transduction system that modulates chemotaxis in response to various stimuli. Catalyzes the demethylation of specific methylglutamate residues introduced into the chemoreceptors (methyl-accepting chemotaxis proteins or MCP) by CheR. Also mediates the irreversible deamidation of specific glutamine residues to glutamic acid. The protein is Protein-glutamate methylesterase/protein-glutamine glutaminase 2 of Cupriavidus metallidurans (strain ATCC 43123 / DSM 2839 / NBRC 102507 / CH34) (Ralstonia metallidurans).